A 144-amino-acid chain; its full sequence is NADH-ubiquinone oxidoreductase chain 6 (144 aa).

5 consecutive transmembrane segments (helical) span residues 1 to 21, 26 to 46, 47 to 67, 76 to 96, and 108 to 128; these read MLGS…INVD, SFFL…FLHV, WFSY…LVYF, VVTP…YPFF, and FYFS…IFFM.

The protein belongs to the complex I subunit 6 family.

It is found in the mitochondrion membrane. It carries out the reaction a ubiquinone + NADH + 5 H(+)(in) = a ubiquinol + NAD(+) + 4 H(+)(out). Functionally, core subunit of the mitochondrial membrane respiratory chain NADH dehydrogenase (Complex I) that is believed to belong to the minimal assembly required for catalysis. Complex I functions in the transfer of electrons from NADH to the respiratory chain. The immediate electron acceptor for the enzyme is believed to be ubiquinone. The chain is NADH-ubiquinone oxidoreductase chain 6 (ND6) from Ascaris suum (Pig roundworm).